The following is an 835-amino-acid chain: Outer membrane usher protein FasD (835 aa).

A signal peptide spans Met1–Ala21. A disulfide bridge connects residues Cys810 and Cys834.

The protein belongs to the fimbrial export usher family.

The protein resides in the cell outer membrane. Its function is as follows. Involved in the export and assembly of the 987P fimbriae subunits across the outer membrane. This chain is Outer membrane usher protein FasD (fasD), found in Escherichia coli.